The sequence spans 439 residues: Thymidine phosphorylase (439 aa).

The protein belongs to the thymidine/pyrimidine-nucleoside phosphorylase family. In terms of assembly, homodimer.

It catalyses the reaction thymidine + phosphate = 2-deoxy-alpha-D-ribose 1-phosphate + thymine. The protein operates within pyrimidine metabolism; dTMP biosynthesis via salvage pathway; dTMP from thymine: step 1/2. Its function is as follows. The enzymes which catalyze the reversible phosphorolysis of pyrimidine nucleosides are involved in the degradation of these compounds and in their utilization as carbon and energy sources, or in the rescue of pyrimidine bases for nucleotide synthesis. The protein is Thymidine phosphorylase of Mesorhizobium japonicum (strain LMG 29417 / CECT 9101 / MAFF 303099) (Mesorhizobium loti (strain MAFF 303099)).